A 1057-amino-acid chain; its full sequence is Carbamoyl phosphate synthase large chain (1057 aa).

Residues 1-401 are carboxyphosphate synthetic domain; that stretch reads MPKRNDIKTI…SLLKAIRSLE (401 aa). ATP contacts are provided by R129, R169, G175, G176, K208, I210, E215, G241, I242, H243, Q284, and E298. Residues 133–327 form the ATP-grasp 1 domain; it reads RTLMNDLNVP…IAKLAAKIAV (195 aa). Q284, E298, and N300 together coordinate Mg(2+). The Mn(2+) site is built by Q284, E298, and N300. Positions 402–546 are oligomerization domain; it reads YGVHHLGLPN…YGTYETENES (145 aa). Positions 547 to 929 are carbamoyl phosphate synthetic domain; that stretch reads IVTDKEKILV…ALFKGLTGSG (383 aa). The ATP-grasp 2 domain occupies 671–861; sequence EALLRKINVP…MAQLAMRAII (191 aa). Positions 707, 746, 748, 752, 777, 778, 779, 780, 820, and 832 each coordinate ATP. Mg(2+) contacts are provided by Q820, E832, and N834. Mn(2+) is bound by residues Q820, E832, and N834. The 128-residue stretch at 930 to 1057 folds into the MGS-like domain; sequence VEVKDHGTVL…ESMTFTMRQM (128 aa). The segment at 930–1057 is allosteric domain; it reads VEVKDHGTVL…ESMTFTMRQM (128 aa).

It belongs to the CarB family. As to quaternary structure, composed of two chains; the small (or glutamine) chain promotes the hydrolysis of glutamine to ammonia, which is used by the large (or ammonia) chain to synthesize carbamoyl phosphate. Tetramer of heterodimers (alpha,beta)4. It depends on Mg(2+) as a cofactor. Mn(2+) serves as cofactor.

It carries out the reaction hydrogencarbonate + L-glutamine + 2 ATP + H2O = carbamoyl phosphate + L-glutamate + 2 ADP + phosphate + 2 H(+). The enzyme catalyses hydrogencarbonate + NH4(+) + 2 ATP = carbamoyl phosphate + 2 ADP + phosphate + 2 H(+). It functions in the pathway amino-acid biosynthesis; L-arginine biosynthesis; carbamoyl phosphate from bicarbonate: step 1/1. The protein operates within pyrimidine metabolism; UMP biosynthesis via de novo pathway; (S)-dihydroorotate from bicarbonate: step 1/3. Functionally, large subunit of the glutamine-dependent carbamoyl phosphate synthetase (CPSase). CPSase catalyzes the formation of carbamoyl phosphate from the ammonia moiety of glutamine, carbonate, and phosphate donated by ATP, constituting the first step of 2 biosynthetic pathways, one leading to arginine and/or urea and the other to pyrimidine nucleotides. The large subunit (synthetase) binds the substrates ammonia (free or transferred from glutamine from the small subunit), hydrogencarbonate and ATP and carries out an ATP-coupled ligase reaction, activating hydrogencarbonate by forming carboxy phosphate which reacts with ammonia to form carbamoyl phosphate. This is Carbamoyl phosphate synthase large chain from Staphylococcus aureus (strain USA300 / TCH1516).